Consider the following 199-residue polypeptide: Protein-methionine-sulfoxide reductase heme-binding subunit MsrQ (199 aa).

4 helical membrane passes run 10–30, 82–102, 116–136, and 153–173; these read WLKVCLHLAGFLPLLWLFWAI, LWCFVWATLHLTSYALLELGI, PYLTLGIISWLVLLALTLTST, and VVYLVAILAPIHYLWSVKILS.

Belongs to the MsrQ family. In terms of assembly, heterodimer of a catalytic subunit (MsrP) and a heme-binding subunit (MsrQ). Requires FMN as cofactor. Heme b serves as cofactor.

It is found in the cell inner membrane. In terms of biological role, part of the MsrPQ system that repairs oxidized periplasmic proteins containing methionine sulfoxide residues (Met-O), using respiratory chain electrons. Thus protects these proteins from oxidative-stress damage caused by reactive species of oxygen and chlorine generated by the host defense mechanisms. MsrPQ is essential for the maintenance of envelope integrity under bleach stress, rescuing a wide series of structurally unrelated periplasmic proteins from methionine oxidation, including the primary periplasmic chaperone SurA and the lipoprotein Pal. MsrQ provides electrons for reduction to the reductase catalytic subunit MsrP, using the quinone pool of the respiratory chain. This chain is Protein-methionine-sulfoxide reductase heme-binding subunit MsrQ, found in Salmonella agona (strain SL483).